Here is a 335-residue protein sequence, read N- to C-terminus: Protein-glutamate methylesterase/protein-glutamine glutaminase 3 (335 aa).

A Response regulatory domain is found at 2 to 119 (RIGIVNDMPL…GNPQTAAAPL (118 aa)). Asp-53 is subject to 4-aspartylphosphate. The CheB-type methylesterase domain maps to 144-335 (PKAGGARQRL…IAPRLAEVFD (192 aa)). Residues Ser-159, His-186, and Asp-279 contribute to the active site.

It belongs to the CheB family. Phosphorylated by CheA. Phosphorylation of the N-terminal regulatory domain activates the methylesterase activity.

Its subcellular location is the cytoplasm. It catalyses the reaction [protein]-L-glutamate 5-O-methyl ester + H2O = L-glutamyl-[protein] + methanol + H(+). The enzyme catalyses L-glutaminyl-[protein] + H2O = L-glutamyl-[protein] + NH4(+). Its function is as follows. Involved in chemotaxis. Part of a chemotaxis signal transduction system that modulates chemotaxis in response to various stimuli. Catalyzes the demethylation of specific methylglutamate residues introduced into the chemoreceptors (methyl-accepting chemotaxis proteins or MCP) by CheR. Also mediates the irreversible deamidation of specific glutamine residues to glutamic acid. The chain is Protein-glutamate methylesterase/protein-glutamine glutaminase 3 from Pseudomonas aeruginosa (strain ATCC 15692 / DSM 22644 / CIP 104116 / JCM 14847 / LMG 12228 / 1C / PRS 101 / PAO1).